A 546-amino-acid chain; its full sequence is Capsid protein VP1 (546 aa).

Positions 1 to 38 (MMMASKDAPQSADGASGAGQLVPEVNTADPLPMEPVAG) are disordered. The segment at 1-226 (MMMASKDAPQ…FLFLVPPTIE (226 aa)) is shell domain. The interval 227–279 (QKTRAFTVPNIPLQTLSNSRFPSLIQGMILSPDASQVVQFQNGRCLIDGQLLG) is P1 sub-domain 1. Positions 227-545 (QKTRAFTVPN…TARGRLGVRR (319 aa)) are protruding domain. A P2 sub-domain region spans residues 280 to 416 (TTPATSGQLF…GSSLSQAANL (137 aa)). A P1 sub-domain 2 region spans residues 417-546 (APPVFPPGFG…ARGRLGVRRI (130 aa)). The interval 538 to 545 (RGRLGVRR) is plays a role in binding to host histo-blood group structures antigens and in the formation of P-particles.

The protein belongs to the caliciviridae capsid protein family. As to quaternary structure, homodimer. Homomultimer. Interacts with the minor capsid protein VP2. Interacts (via C-terminus) with host type I histo-blood group structures antigens at the surface of target cells. May be cleaved by host protease to generate soluble capsid protein. Assembled capsid cannot be cleaved.

It is found in the virion. Its subcellular location is the host cytoplasm. Its function is as follows. Capsid protein self assembles to form an icosahedral capsid with a T=3 symmetry, about 38 nm in diameter, and consisting of 180 capsid proteins. A smaller form of capsid with a diameter of 23 nm might be capsid proteins assembled as icosahedron with T=1 symmetry. The capsid encapsulates the genomic RNA and is decorated with VP2 proteins. Attaches virion to target cells by binding histo-blood group antigens (HBGAs) present on gastroduodenal epithelial cells. In terms of biological role, the soluble capsid protein may play a role in viral immunoevasion. The sequence is that of Capsid protein VP1 from Southampton virus (strain GI/Human/United Kingdom/Southampton/1991) (SHV).